A 178-amino-acid polypeptide reads, in one-letter code: Ribosome maturation factor RimP (178 aa).

This sequence belongs to the RimP family.

It is found in the cytoplasm. Its function is as follows. Required for maturation of 30S ribosomal subunits. The protein is Ribosome maturation factor RimP of Mycobacterium avium (strain 104).